Here is a 312-residue protein sequence, read N- to C-terminus: Olfactory receptor 6C2 (312 aa).

Residues 1-23 (MKNHTVIRTFILLGLTGDPHLQV) lie on the Extracellular side of the membrane. N-linked (GlcNAc...) asparagine glycosylation is present at N3. The helical transmembrane segment at 24 to 44 (LLFIFLFLTYMLSVTGNLTII) threads the bilayer. The Cytoplasmic segment spans residues 45–52 (TLTLVDHH). A helical transmembrane segment spans residues 53–73 (LKTPMYFFLRNFSFLEVSFTT). Topologically, residues 74–97 (VCIPRFLYNISMGDNTITYNACAS) are extracellular. Residue N82 is glycosylated (N-linked (GlcNAc...) asparagine). C95 and C187 are oxidised to a cystine. Residues 98–118 (QIFFVILFGATEFFLLAAMSY) traverse the membrane as a helical segment. Residues 119 to 137 (DRYVAICKPLHYVVIMNNR) are Cytoplasmic-facing. The helical transmembrane segment at 138-158 (VCTLLVLCCWVAGLMIIVPPL) threads the bilayer. Residues 159–195 (SLGLQLEFCDSNAIDHFSCDAGPLLKISCSDTWVIEQ) lie on the Extracellular side of the membrane. A helical transmembrane segment spans residues 196 to 215 (MVILMAVFALIITLVCVILS). Topologically, residues 216–235 (YLYIVRTILKFPSVQQRKKA) are cytoplasmic. The chain crosses the membrane as a helical span at residues 236 to 256 (FSTCSSHMIVVSIAYGSCIFI). The Extracellular segment spans residues 257-269 (YIKPSAKDEVAIN). The chain crosses the membrane as a helical span at residues 270–290 (KGVSVLTTSVAPLLNPFIYTL). The Cytoplasmic segment spans residues 291 to 312 (RNKQVKQAFSDSIKRIAFLSKK).

The protein belongs to the G-protein coupled receptor 1 family.

It localises to the cell membrane. In terms of biological role, odorant receptor. This chain is Olfactory receptor 6C2 (OR6C2), found in Homo sapiens (Human).